The sequence spans 134 residues: MSWQTYVDDHLMCDIEGHEGHRLTLAAIVGHDGSVWAQSATSPQFKPEEMNGIMTDFNEPGHLAPTGLHLGGTKYMVIQGEAGAVIRGKKGSGGITIKKTGQALVCGIYEEPVTPGQCNMVVERLGDYLLEQGL.

Residues Cys13 and Cys118 are joined by a disulfide bond. Positions 84–100 match the Involved in PIP2 interaction motif; that stretch reads AVIRGKKGSGGITIKKT. Residue Thr114 is modified to Phosphothreonine.

This sequence belongs to the profilin family. In terms of assembly, occurs in many kinds of cells as a complex with monomeric actin in a 1:1 ratio. In terms of processing, phosphorylated by MAP kinases.

Its subcellular location is the cytoplasm. It localises to the cytoskeleton. Binds to actin and affects the structure of the cytoskeleton. At high concentrations, profilin prevents the polymerization of actin, whereas it enhances it at low concentrations. This chain is Profilin-3, found in Olea europaea (Common olive).